Reading from the N-terminus, the 336-residue chain is MKGKFLKVSSLFVATLTTATLVSSPAANALSSKAMDNHPQQTQSSKQQTPKIQKGGNLKPLEQREHANVILPNNDRHQITDTTNGHYAPVTYIQVEAPTGTFIASGVVVGKDTLLTNKHVVDATHGDPHALKAFPSAINQDNYPNGGFTAEQITKYSGEGDLAIVKFSPNEQNKHIGEVVKPATMSNNAETQVNQNITVTGYPGDKPVATMWESKGKITYLKGEAMQYDLSTTGGNSGSPVFNEKNEVIGIHWGGVPNEFNGAVFINENVRNFLKQNIEDIHFANDDQPNNPDNPDNPNNPDNPNNPDEPNNPDNPNNPDNPDNGDNNNSDNPDAA.

An N-terminal signal peptide occupies residues methionine 1–alanine 29. Positions leucine 30 to asparagine 68 are excised as a propeptide. Residues alanine 34–leucine 61 form a disordered region. A compositionally biased stretch (low complexity) spans proline 39–lysine 51. Active-site charge relay system residues include histidine 119, aspartate 161, and serine 237. Residues phenylalanine 283 to alanine 336 form a disordered region. Positions aspartate 286–alanine 336 are enriched in low complexity. 11 repeat units span residues proline 289–asparagine 291, proline 292–asparagine 294, proline 295–asparagine 297, proline 298–asparagine 300, proline 301–asparagine 303, proline 304–asparagine 306, proline 310–asparagine 312, proline 313–asparagine 315, proline 316–asparagine 318, proline 319–asparagine 321, and proline 322–asparagine 324. Residues proline 289–asparagine 324 are 11 X 3 AA repeats of P-[DN]-N.

Belongs to the peptidase S1B family. Proteolytically cleaved by aureolysin (aur). This cleavage leads to the activation of SspA.

It localises to the secreted. It carries out the reaction Preferential cleavage: Glu-|-Xaa, Asp-|-Xaa.. Functionally, preferentially cleaves peptide bonds on the carboxyl-terminal side of aspartate and glutamate. Along with other extracellular proteases it is involved in colonization and infection of human tissues. Required for proteolytic maturation of thiol protease SspB and inactivation of SspC, an inhibitor of SspB. It is the most important protease for degradation of fibronectin-binding protein (FnBP) and surface protein A, which are involved in adherence to host cells. May also protect bacteria against host defense mechanism by cleaving the immunoglobulin classes IgG, IgA and IgM. May be involved in the stability of secreted lipases. In Staphylococcus aureus (strain NCTC 8325 / PS 47), this protein is Glutamyl endopeptidase (sspA).